Reading from the N-terminus, the 215-residue chain is Ribonuclease T (215 aa).

The 175-residue stretch at 20 to 194 (VVIDVETAGF…YDTERTAVLF (175 aa)) folds into the Exonuclease domain. Mg(2+) contacts are provided by aspartate 23, glutamate 25, histidine 181, and aspartate 186. Histidine 181 (proton donor/acceptor) is an active-site residue.

Belongs to the RNase T family. In terms of assembly, homodimer. Mg(2+) is required as a cofactor.

Functionally, trims short 3' overhangs of a variety of RNA species, leaving a one or two nucleotide 3' overhang. Responsible for the end-turnover of tRNA: specifically removes the terminal AMP residue from uncharged tRNA (tRNA-C-C-A). Also appears to be involved in tRNA biosynthesis. The polypeptide is Ribonuclease T (Salmonella paratyphi A (strain ATCC 9150 / SARB42)).